Consider the following 117-residue polypeptide: UPF0231 protein HI_1724 (117 aa).

Belongs to the UPF0231 family.

This Haemophilus influenzae (strain ATCC 51907 / DSM 11121 / KW20 / Rd) protein is UPF0231 protein HI_1724.